Here is a 340-residue protein sequence, read N- to C-terminus: Protein-arginine kinase (340 aa).

One can recognise a Phosphagen kinase C-terminal domain in the interval 21-242 (VVLSSRIRLA…EQIIMQERVA (222 aa)). Residues 24–28 (SSRIR), His79, Arg113, 164–168 (RASVM), and 195–200 (RGIYGE) each bind ATP.

It belongs to the ATP:guanido phosphotransferase family.

It carries out the reaction L-arginyl-[protein] + ATP = N(omega)-phospho-L-arginyl-[protein] + ADP + H(+). Catalyzes the specific phosphorylation of arginine residues in proteins. The polypeptide is Protein-arginine kinase (Listeria monocytogenes serotype 4b (strain CLIP80459)).